We begin with the raw amino-acid sequence, 2349 residues long: Reducing polyketide synthase AFT16-1 (2349 aa).

Residues 1 to 14 show a composition bias toward basic and acidic residues; sequence MNGKSRDNGHDGKR. Disordered stretches follow at residues 1–21 and 37–80; these read MNGK…VPAE and TNPS…TSNS. In terms of domain architecture, Ketosynthase family 3 (KS3) spans 20–462; the sequence is AEPIAIVGTA…GTNAHTILES (443 aa). Catalysis depends on for beta-ketoacyl synthase activity residues cysteine 194, histidine 333, and histidine 382. The malonyl-CoA:ACP transacylase (MAT) domain stretch occupies residues 578 to 888; the sequence is VFTGQGAQWP…LLYKGVLERF (311 aa). The tract at residues 958–1092 is N-terminal hotdog fold; it reads HPLLGFRSVD…GDILLSHFAK (135 aa). The segment at 958 to 1263 is dehydratase (DH) domain; that stretch reads HPLLGFRSVD…QVEGLKFSCM (306 aa). Residues 958-1269 enclose the PKS/mFAS DH domain; it reads HPLLGFRSVD…FSCMYPAQET (312 aa). The active-site Proton acceptor; for dehydratase activity is the histidine 990. The interval 1111-1269 is C-terminal hotdog fold; sequence MSSVEPSLFY…FSCMYPAQET (159 aa). The active-site Proton donor; for dehydratase activity is aspartate 1170. Residues 1976–2164 form a ketoreductase (KR) domain region; the sequence is SPNKTYLLVG…VVGVGYVARA (189 aa). One can recognise a Carrier domain in the interval 2273–2347; the sequence is EILSGSLKQK…GLCLEAIGQW (75 aa). Serine 2307 is modified (O-(pantetheine 4'-phosphoryl)serine).

It participates in mycotoxin biosynthesis. Reducing polyketide synthase; part of the gene clusters that mediate the biosynthesis of the host-selective toxins (HSTs) AF-toxins responsible for Alternaria black spot of strawberry disease by the strawberry pathotype. AF-toxin I and III are valine derivatives of 2,3-dyhydroxy-isovaleric acid and 2-hydroxy-isovaleric acid respectively, while AF II is an isoleucine derivative of 2-hydroxy-valeric acid. These derivatives are bound to a 9,10-epoxy-8-hydroxy-9-methyl-decatrienoic acid (EDA) moiety. On cellular level, AF-toxins affect plasma membrane of susceptible cells and cause a sudden increase in loss of K(+) after a few minutes of toxin treatment. The aldo-keto reductase AFTS1 catalyzes the conversion of 2-keto-isovaleric acid (2-KIV) to 2-hydroxy-isovaleric acid (2-HIV) by reduction of its ketone to an alcohol. The acyl-CoA ligase AFT1, the hydrolase AFT2 and the enoyl-CoA hydratases AFT3 and AFT6, but also the polyketide synthase AFT9, the acyl-CoA dehydrogenase AFT10, the cytochrome P450 monooxygenase AFT11 and the oxidoreductase AFT12 are all involved in the biosynthesis of the AK-, AF- and ACT-toxin common EDA structural moiety. The exact function of each enzyme, and of additional enzymes identified within the AF-toxin clusters have still to be determined. The protein is Reducing polyketide synthase AFT16-1 of Alternaria alternata (Alternaria rot fungus).